A 474-amino-acid chain; its full sequence is Probable CAAX prenyl protease 1 (474 aa).

3 helical membrane-spanning segments follow: residues 103 to 123, 196 to 216, and 230 to 250; these read SWFS…IIKY, IFVI…SVVV, and FIMY…TIAP. H332 provides a ligand contact to Zn(2+). The active site involves E333. H336 is a Zn(2+) binding site. 2 helical membrane passes run 344–364 and 381–401; these read INTI…AAFI and VIVG…ILTF. E411 is a binding site for Zn(2+). D415 functions as the Proton donor in the catalytic mechanism.

This sequence belongs to the peptidase M48A family. It depends on Zn(2+) as a cofactor.

Its subcellular location is the endoplasmic reticulum membrane. The enzyme catalyses Hydrolyzes the peptide bond -P2-(S-farnesyl or geranylgeranyl)C-P1'-P2'-P3'-COOH where P1' and P2' are amino acids with aliphatic side chains and P3' is any C-terminal residue.. Proteolytically removes the C-terminal three residues of farnesylated proteins. The sequence is that of Probable CAAX prenyl protease 1 from Schizosaccharomyces pombe (strain 972 / ATCC 24843) (Fission yeast).